Consider the following 532-residue polypeptide: CTP synthase (532 aa).

The segment at 1–267 (MTKYIFVTGG…DDIVLEHLQL (267 aa)) is amidoligase domain. A CTP-binding site is contributed by serine 13. Serine 13 provides a ligand contact to UTP. An ATP-binding site is contributed by 14–19 (SIGKGI). Position 54 (tyrosine 54) interacts with L-glutamine. Aspartate 71 is a binding site for ATP. Positions 71 and 141 each coordinate Mg(2+). CTP-binding positions include 148–150 (DIE), 188–193 (KTKPTQ), and lysine 224. UTP-binding positions include 188–193 (KTKPTQ) and lysine 224. Residues 292–532 (RIGLVGKYVS…DFVGAALNNK (241 aa)) form the Glutamine amidotransferase type-1 domain. Glycine 354 contributes to the L-glutamine binding site. The active-site Nucleophile; for glutamine hydrolysis is the cysteine 381. L-glutamine-binding positions include 382-385 (LGMQ), glutamate 405, and arginine 462. Catalysis depends on residues histidine 507 and glutamate 509.

The protein belongs to the CTP synthase family. In terms of assembly, homotetramer.

The catalysed reaction is UTP + L-glutamine + ATP + H2O = CTP + L-glutamate + ADP + phosphate + 2 H(+). It catalyses the reaction L-glutamine + H2O = L-glutamate + NH4(+). The enzyme catalyses UTP + NH4(+) + ATP = CTP + ADP + phosphate + 2 H(+). It participates in pyrimidine metabolism; CTP biosynthesis via de novo pathway; CTP from UDP: step 2/2. Its activity is regulated as follows. Allosterically activated by GTP, when glutamine is the substrate; GTP has no effect on the reaction when ammonia is the substrate. The allosteric effector GTP functions by stabilizing the protein conformation that binds the tetrahedral intermediate(s) formed during glutamine hydrolysis. Inhibited by the product CTP, via allosteric rather than competitive inhibition. Its function is as follows. Catalyzes the ATP-dependent amination of UTP to CTP with either L-glutamine or ammonia as the source of nitrogen. Regulates intracellular CTP levels through interactions with the four ribonucleotide triphosphates. This chain is CTP synthase, found in Listeria innocua serovar 6a (strain ATCC BAA-680 / CLIP 11262).